The chain runs to 132 residues: Small ribosomal subunit protein uS12 (132 aa).

Asp89 carries the 3-methylthioaspartic acid modification. A disordered region spans residues 101–132 (TLDASGAAGPSSTNKATRNRKRSKYGVKRPKA). The segment covering 117 to 132 (TRNRKRSKYGVKRPKA) has biased composition (basic residues).

This sequence belongs to the universal ribosomal protein uS12 family. Part of the 30S ribosomal subunit. Contacts proteins S8 and S17. May interact with IF1 in the 30S initiation complex.

Functionally, with S4 and S5 plays an important role in translational accuracy. In terms of biological role, interacts with and stabilizes bases of the 16S rRNA that are involved in tRNA selection in the A site and with the mRNA backbone. Located at the interface of the 30S and 50S subunits, it traverses the body of the 30S subunit contacting proteins on the other side and probably holding the rRNA structure together. The combined cluster of proteins S8, S12 and S17 appears to hold together the shoulder and platform of the 30S subunit. In Sorangium cellulosum (strain So ce56) (Polyangium cellulosum (strain So ce56)), this protein is Small ribosomal subunit protein uS12.